Here is a 179-residue protein sequence, read N- to C-terminus: Negative modulator of initiation of replication (179 aa).

Residues 86–87 are interaction with DNA; that stretch reads AV.

The protein belongs to the SeqA family. As to quaternary structure, homodimer. Polymerizes to form helical filaments.

Its subcellular location is the cytoplasm. Negative regulator of replication initiation, which contributes to regulation of DNA replication and ensures that replication initiation occurs exactly once per chromosome per cell cycle. Binds to pairs of hemimethylated GATC sequences in the oriC region, thus preventing assembly of replication proteins and re-initiation at newly replicated origins. Repression is relieved when the region becomes fully methylated. This is Negative modulator of initiation of replication from Shewanella woodyi (strain ATCC 51908 / MS32).